A 48-amino-acid polypeptide reads, in one-letter code: GIINDRETGRSRGFGFVTFNNEKGFGFVTFNNEKGFGFVTFNNEKSMR.

The polypeptide is Glycine-rich RNA-binding protein 2 (Populus euphratica (Euphrates poplar)).